Here is a 202-residue protein sequence, read N- to C-terminus: Endothelin-1 (202 aa).

The first 25 residues, 1-25 (MDYFPMIFALLFVAFQGAPEAAVLG), serve as a signal peptide directing secretion. A propeptide spanning residues 26–50 (TELSTGAESGGERPVPTTPWRPRRS) is cleaved from the precursor. Positions 29–48 (STGAESGGERPVPTTPWRPR) are disordered. Disulfide bonds link C53-C67 and C55-C63. A propeptide spanning residues 74-202 (VNTPEHVVPY…DKKVIYSRAH (129 aa)) is cleaved from the precursor. Residues 110–124 (CQCASQTDKKCQNFC) are endothelin-like.

Belongs to the endothelin/sarafotoxin family.

It localises to the secreted. In terms of biological role, endothelins are endothelium-derived vasoconstrictor peptides. Probable ligand for G-protein coupled receptors EDNRA and EDNRB which activates PTK2B, BCAR1, BCAR3 and, GTPases RAP1 and RHOA cascade in glomerular mesangial cells. Also binds the DEAR/FBXW7-AS1 receptor. Promotes mesenteric arterial wall remodeling via activation of ROCK signaling and subsequent colocalization of NFATC3 with F-actin filaments. NFATC3 then translocates to the nucleus where it subsequently promotes the transcription of the smooth muscle hypertrophy and differentiation marker ACTA2. In Ovis aries (Sheep), this protein is Endothelin-1 (EDN1).